The sequence spans 269 residues: Pertussis toxin subunit 1 homolog (269 aa).

A signal peptide spans 1–34 (MRCTRAIRQTARTGWLTWLAILAVTAPMTSPAWA).

This sequence belongs to the bacterial exotoxin subunit A family.

The chain is Pertussis toxin subunit 1 homolog (ptxA) from Bordetella parapertussis (strain 12822 / ATCC BAA-587 / NCTC 13253).